The sequence spans 290 residues: L-cysteine S-thiosulfotransferase subunit SoxA (290 aa).

The signal sequence occupies residues 1–26 (MPRFTKTKGTLAATALGLALAGAAFA). Asp78 and Asp81 together coordinate Zn(2+). Residues 78–171 (DDFDNPAMVF…DMLSLISLQS (94 aa)) form the Cytochrome c domain. Heme c-binding residues include Cys106, Cys109, His110, and Cys143. Residue His190 participates in Zn(2+) binding. The heme c site is built by Cys206, Cys209, and His210. Arg247 is a binding site for substrate. Cys251 contributes to the heme c binding site. Cys251 serves as the catalytic Cysteine persulfide intermediate. Asp266 contributes to the Zn(2+) binding site.

It belongs to the SoxA family. Heterodimer of SoxA and SoxX. It depends on heme c as a cofactor. Zn(2+) is required as a cofactor. Cysteine persulfide at Cys-251.

The protein resides in the periplasm. The catalysed reaction is L-cysteinyl-[SoxY protein] + thiosulfate + 2 Fe(III)-[cytochrome c] = S-sulfosulfanyl-L-cysteinyl-[SoxY protein] + 2 Fe(II)-[cytochrome c] + 2 H(+). The enzyme catalyses S-sulfanyl-L-cysteinyl-[SoxY protein] + thiosulfate + 2 Fe(III)-[cytochrome c] = S-(2-sulfodisulfanyl)-L-cysteinyl-[SoxY protein] + 2 Fe(II)-[cytochrome c] + 2 H(+). In terms of biological role, C-type diheme cytochrome, which is part of the SoxAX cytochrome complex involved in sulfur oxidation. The SoxAX complex catalyzes the formation of a heterodisulfide bond between the conserved cysteine residue on a sulfur carrier SoxYZ complex subunit SoxY and thiosulfate or other inorganic sulfur substrates. This leads to the liberation of two electrons, which may be transferred from the SoxAX complex to another cytochrome c that then channels them into the respiratory electron transport chain. Some electrons may be used for reductive CO(2) fixation. The sequence is that of L-cysteine S-thiosulfotransferase subunit SoxA from Paracoccus pantotrophus (Thiosphaera pantotropha).